We begin with the raw amino-acid sequence, 217 residues long: MRLKTWIVAFFLGLFGTTVNADTTHKTDVSVTLSTAQGVQVLFVNGVSTDELSTPYTLIDGSNQVVIKVNKAIGRGDKRTQVYSAPYILGFSSGAGELYIDAPSFRDKRQADKLFEKDTMDWKVSINDKSIDYSQYKMPGKKGAFPYSNLDEQLAEYNELNGVYFSNGKRVELSELQATGTAKETHRVNSPLTKAKIAYLEMTDEERQLFMKWVSQQ.

Positions 1–21 are cleaved as a signal peptide; sequence MRLKTWIVAFFLGLFGTTVNA.

This sequence belongs to the UPF0319 family.

This chain is UPF0319 protein VP1009, found in Vibrio parahaemolyticus serotype O3:K6 (strain RIMD 2210633).